The chain runs to 149 residues: Large ribosomal subunit protein uL15 (149 aa).

The segment at 1–53 is disordered; it reads MRLHTLQPAPGAKSTRKRVGRGTSSGHGKTSGFGHKGQKARSGRVGKRGFEGG. Residues 23–35 are compositionally biased toward gly residues; that stretch reads TSSGHGKTSGFGH. Residues 36–47 show a composition bias toward basic residues; sequence KGQKARSGRVGK.

Belongs to the universal ribosomal protein uL15 family. In terms of assembly, part of the 50S ribosomal subunit.

Its function is as follows. Binds to the 23S rRNA. This is Large ribosomal subunit protein uL15 from Coprothermobacter proteolyticus (strain ATCC 35245 / DSM 5265 / OCM 4 / BT).